The primary structure comprises 402 residues: APO protein 3, mitochondrial (402 aa).

The transit peptide at 1–13 (MQRRKLVEISIFV) directs the protein to the mitochondrion. The disordered stretch occupies residues 37-59 (NDEDPLYADVPKPPKDKSERKPY). Over residues 48-58 (KPPKDKSERKP) the composition is skewed to basic and acidic residues. 2 APO domains span residues 127-213 (RCRL…DLEK) and 294-380 (TCGY…PVPD).

It belongs to the APO family.

Its subcellular location is the mitochondrion. Its function is as follows. May be involved in the stable assembly of several 4Fe-4S cluster-containing complexes of mitochondria. The polypeptide is APO protein 3, mitochondrial (APO3) (Arabidopsis thaliana (Mouse-ear cress)).